The chain runs to 457 residues: tRNA modification GTPase MnmE (457 aa).

Residues Arg-22, Glu-83, and Arg-122 each contribute to the (6S)-5-formyl-5,6,7,8-tetrahydrofolate site. Residues 219-378 form the TrmE-type G domain; the sequence is GLATAIIGRP…LEEAIKALFF (160 aa). Position 229 (Asn-229) interacts with K(+). GTP is bound by residues 229-234, 248-254, and 273-276; these read NVGKSS, TDIAGTT, and DTAG. Mg(2+) is bound at residue Ser-233. Residues Thr-248, Ile-250, and Thr-253 each coordinate K(+). A Mg(2+)-binding site is contributed by Thr-254. Position 457 (Lys-457) interacts with (6S)-5-formyl-5,6,7,8-tetrahydrofolate.

Belongs to the TRAFAC class TrmE-Era-EngA-EngB-Septin-like GTPase superfamily. TrmE GTPase family. In terms of assembly, homodimer. Heterotetramer of two MnmE and two MnmG subunits. K(+) serves as cofactor.

It is found in the cytoplasm. In terms of biological role, exhibits a very high intrinsic GTPase hydrolysis rate. Involved in the addition of a carboxymethylaminomethyl (cmnm) group at the wobble position (U34) of certain tRNAs, forming tRNA-cmnm(5)s(2)U34. The polypeptide is tRNA modification GTPase MnmE (Listeria innocua serovar 6a (strain ATCC BAA-680 / CLIP 11262)).